We begin with the raw amino-acid sequence, 370 residues long: tRNA-specific 2-thiouridylase MnmA (370 aa).

ATP-binding positions include 11–18 (GMSGGVDS) and methionine 37. The interaction with target base in tRNA stretch occupies residues 97–99 (NPD). Cysteine 102 (nucleophile) is an active-site residue. Cysteine 102 and cysteine 199 are disulfide-bonded. ATP is bound at residue glycine 126. The segment at 149-151 (KDQ) is interaction with tRNA. Cysteine 199 serves as the catalytic Cysteine persulfide intermediate. The interaction with tRNA stretch occupies residues 307 to 308 (RY).

Belongs to the MnmA/TRMU family.

It localises to the cytoplasm. The catalysed reaction is S-sulfanyl-L-cysteinyl-[protein] + uridine(34) in tRNA + AH2 + ATP = 2-thiouridine(34) in tRNA + L-cysteinyl-[protein] + A + AMP + diphosphate + H(+). Its function is as follows. Catalyzes the 2-thiolation of uridine at the wobble position (U34) of tRNA, leading to the formation of s(2)U34. This is tRNA-specific 2-thiouridylase MnmA from Staphylococcus carnosus (strain TM300).